A 445-amino-acid polypeptide reads, in one-letter code: Glycerophosphocholine choline phosphodiesterase ENPP6 (445 aa).

The signal sequence occupies residues 1–22 (MAGKLGVLLLALVLSLAQPASA). Residues aspartate 32, serine 71, and asparagine 92 each contribute to the substrate site. Zn(2+) contacts are provided by aspartate 32 and serine 71. The active-site Nucleophile is serine 71. Phosphoserine is present on serine 71. 2 N-linked (GlcNAc...) asparagine glycosylation sites follow: asparagine 100 and asparagine 118. Cysteines 142 and 154 form a disulfide. Aspartate 193 contributes to the substrate binding site. Residues aspartate 193, histidine 197, aspartate 240, and histidine 241 each contribute to the Zn(2+) site. Position 241 (histidine 241) interacts with substrate. Asparagine 341 carries N-linked (GlcNAc...) asparagine glycosylation. Histidine 356 lines the substrate pocket. Zn(2+) is bound at residue histidine 356. An N-linked (GlcNAc...) asparagine glycan is attached at asparagine 406. The GPI-anchor amidated serine moiety is linked to residue serine 421. The propeptide at 422–445 (SAPGAPPCACALVTVLLVLLAILA) is removed in mature form.

This sequence belongs to the nucleotide pyrophosphatase/phosphodiesterase family. As to quaternary structure, homodimer; disulfide-linked. Homotetramer. Requires Zn(2+) as cofactor.

The protein localises to the cell membrane. The catalysed reaction is sn-glycerol 3-phosphocholine + H2O = phosphocholine + glycerol + H(+). It catalyses the reaction a 1-acyl-sn-glycero-3-phosphocholine + H2O = a 1-acyl-sn-glycerol + phosphocholine + H(+). The enzyme catalyses a 1-O-alkyl-sn-glycero-3-phosphocholine + H2O = a 1-O-alkyl-sn-glycerol + phosphocholine + H(+). It carries out the reaction 1-dodecanoyl-sn-glycero-3-phosphocholine + H2O = 1-dodecanoyl-sn-glycerol + phosphocholine + H(+). The catalysed reaction is 1-hexadecanoyl-sn-glycero-3-phosphocholine + H2O = 1-hexadecanoyl-sn-glycerol + phosphocholine + H(+). It catalyses the reaction 1-(5Z,8Z,11Z,14Z-eicosatetraenoyl)-sn-glycero-3-phosphocholine + H2O = 1-(5Z,8Z,11Z,14Z-eicosatetraenoyl)-sn-glycerol + phosphocholine + H(+). The enzyme catalyses 1-tetradecanoyl-sn-glycero-3-phosphocholine + H2O = 1-tetradecanoyl-sn-glycerol + phosphocholine + H(+). It carries out the reaction sphing-4-enine-phosphocholine + H2O = sphing-4-enine + phosphocholine + H(+). The catalysed reaction is 1-(9Z-octadecenoyl)-sn-glycero-3-phosphocholine + H2O = 1-(9Z-octadecenoyl)-sn-glycerol + phosphocholine + H(+). It catalyses the reaction 1-(9Z,12Z)-octadecadienoyl-sn-glycero-3-phosphocholine + H2O = 1-(9Z,12Z-octadecadienoyl)-sn-glycerol + phosphocholine + H(+). The enzyme catalyses glycero-2-phosphocholine + H2O = phosphocholine + glycerol + H(+). Its activity is regulated as follows. Inhibited by EDTA and EGTA in vitro. Choline-specific glycerophosphodiesterase that hydrolyzes glycerophosphocholine (GPC) and lysophosphatidylcholine (LPC) and contributes to supplying choline to the cells. Has a preference for LPC with short (12:0 and 14:0) or polyunsaturated (18:2 and 20:4) fatty acids. In vitro, hydrolyzes only choline-containing lysophospholipids, such as sphingosylphosphorylcholine (SPC), platelet-activating factor (PAF) and lysoPAF, but not other lysophospholipids. This is Glycerophosphocholine choline phosphodiesterase ENPP6 from Bos taurus (Bovine).